The primary structure comprises 449 residues: Tubulin alpha-1C chain (449 aa).

The MREC motif signature appears at 1 to 4 (MREC). Residue glutamine 11 coordinates GTP. Lysine 40 is modified (N6-acetyllysine). GTP is bound by residues glutamate 71, serine 140, glycine 144, threonine 145, threonine 179, asparagine 206, and asparagine 228. Glutamate 71 contacts Mg(2+). Glutamate 254 is a catalytic residue. 3'-nitrotyrosine is present on tyrosine 282. The disordered stretch occupies residues 429 to 449 (EKDYEEVGADSAEGDDEGDEY). Positions 431–449 (DYEEVGADSAEGDDEGDEY) are enriched in acidic residues. Tyrosine 432 carries the phosphotyrosine modification. Position 439 is a phosphoserine (serine 439). Tyrosine 449 is modified (3'-nitrotyrosine).

This sequence belongs to the tubulin family. In terms of assembly, dimer of alpha and beta chains. A typical microtubule is a hollow water-filled tube with an outer diameter of 25 nm and an inner diameter of 15 nM. Alpha-beta heterodimers associate head-to-tail to form protofilaments running lengthwise along the microtubule wall with the beta-tubulin subunit facing the microtubule plus end conferring a structural polarity. Microtubules usually have 13 protofilaments but different protofilament numbers can be found in some organisms and specialized cells. Mg(2+) is required as a cofactor. Post-translationally, some glutamate residues at the C-terminus are polyglycylated, resulting in polyglycine chains on the gamma-carboxyl group. Glycylation is mainly limited to tubulin incorporated into axonemes (cilia and flagella) whereas glutamylation is prevalent in neuronal cells, centrioles, axonemes, and the mitotic spindle. Both modifications can coexist on the same protein on adjacent residues, and lowering polyglycylation levels increases polyglutamylation, and reciprocally. Cilia and flagella glycylation is required for their stability and maintenance. Flagella glycylation controls sperm motility. In terms of processing, some glutamate residues at the C-terminus are polyglutamylated, resulting in polyglutamate chains on the gamma-carboxyl group. Polyglutamylation plays a key role in microtubule severing by spastin (SPAST). SPAST preferentially recognizes and acts on microtubules decorated with short polyglutamate tails: severing activity by SPAST increases as the number of glutamates per tubulin rises from one to eight, but decreases beyond this glutamylation threshold. Glutamylation is also involved in cilia motility. Acetylation of alpha chains at Lys-40 is located inside the microtubule lumen. This modification has been correlated with increased microtubule stability, intracellular transport and ciliary assembly. Post-translationally, methylation of alpha chains at Lys-40 is found in mitotic microtubules and is required for normal mitosis and cytokinesis contributing to genomic stability. In terms of processing, nitration of Tyr-449 is irreversible and interferes with normal dynein intracellular distribution. Undergoes a tyrosination/detyrosination cycle, the cyclic removal and re-addition of a C-terminal tyrosine residue by the enzymes tubulin tyrosine carboxypeptidase (MATCAP1, VASH1 or VASH2) and tubulin tyrosine ligase (TTL), respectively. Post-translationally, tyrosination promotes microtubule interaction with CAP-Gly domain-containing proteins such as CLIP1, CLIP2 and DCTN1. Tyrosination regulates the initiation of dynein-dynactin motility via interaction with DCTN1, which brings the dynein-dynactin complex into contact with microtubules. In neurons, tyrosinated tubulins mediate the initiation of retrograde vesicle transport. In terms of processing, detyrosination is involved in metaphase plate congression by guiding chromosomes during mitosis: detyrosination promotes interaction with CENPE, promoting pole-proximal transport of chromosomes toward the equator. Detyrosination increases microtubules-dependent mechanotransduction in dystrophic cardiac and skeletal muscle. In cardiomyocytes, detyrosinated microtubules are required to resist to contractile compression during contraction: detyrosination promotes association with desmin (DES) at force-generating sarcomeres, leading to buckled microtubules and mechanical resistance to contraction.

The protein resides in the cytoplasm. Its subcellular location is the cytoskeleton. The catalysed reaction is GTP + H2O = GDP + phosphate + H(+). In terms of biological role, tubulin is the major constituent of microtubules, a cylinder consisting of laterally associated linear protofilaments composed of alpha- and beta-tubulin heterodimers. Microtubules grow by the addition of GTP-tubulin dimers to the microtubule end, where a stabilizing cap forms. Below the cap, tubulin dimers are in GDP-bound state, owing to GTPase activity of alpha-tubulin. The protein is Tubulin alpha-1C chain (TUBA1C) of Bos taurus (Bovine).